We begin with the raw amino-acid sequence, 177 residues long: von Ebner gland protein 1 (177 aa).

Residues 1–18 (MKALLLTFGLSLLAALQA) form the signal peptide. A disulfide bridge links C80 with C172.

This sequence belongs to the calycin superfamily. Lipocalin family. In terms of assembly, homodimer.

Its subcellular location is the secreted. In terms of biological role, could play a role in taste reception. Could be necessary for the concentration and delivery of sapid molecules in the gustatory system. This is von Ebner gland protein 1 (Vegp1) from Rattus norvegicus (Rat).